We begin with the raw amino-acid sequence, 292 residues long: (S)-phenoxypropionate/alpha-ketoglutarate-dioxygenase (292 aa).

Residues His-108 and Asp-110 each contribute to the Fe cation site. Thr-135 and Trp-247 together coordinate 2-oxoglutarate. Residue His-262 coordinates Fe cation. Arg-273 is a 2-oxoglutarate binding site.

The protein belongs to the TfdA dioxygenase family. In terms of assembly, monomer. It depends on Fe cation as a cofactor. Requires L-ascorbate as cofactor.

The catalysed reaction is (S)-2-(4-chloro-2-methylphenoxy)propanoate + 2-oxoglutarate + O2 = 2-methyl-4-chlorophenol + pyruvate + succinate + CO2. It catalyses the reaction (S)-(2,4-dichlorophenoxy)propanoate + 2-oxoglutarate + O2 = 2,4-dichlorophenol + pyruvate + succinate + CO2. It functions in the pathway xenobiotic degradation; 2-(2,4-dichlorophenoxy)propanoate degradation. Inhibited by divalent cations, most significantly by copper and nickel, and by diethylpyrocarbonate (DEPC). Involved in the degradation of the phenoxypropionate herbicides. Catalyzes the enantiospecific cleavage of the ether bond in the herbicid S-dichlorprop ((S)-2-(2,4-dichlorophenoxy)propionate)(S-2,4-DP) and S-mecoprop ((S)-2-(4-chloro-2-methylphenoxy)propionate)(S-2,4-MCPP). It can also accept (RS)-2-(4-chlorophenoxy)propionate, (RS)-2-(m-chlorophenoxy)propionate and phenoxyacetate derivatives such as 2,4-dichlorophenoxyacetate (2,4-D), however it can only accept 2-oxoglutarate as oxygen acceptor. In Delftia acidovorans (Pseudomonas acidovorans), this protein is (S)-phenoxypropionate/alpha-ketoglutarate-dioxygenase.